A 418-amino-acid chain; its full sequence is Cyclin-A1 (418 aa).

Belongs to the cyclin family. Cyclin AB subfamily. In terms of assembly, interacts with the CDK1 and the CDK2 protein kinases to form a serine/threonine kinase holoenzyme complex. The cyclin subunit imparts substrate specificity to the complex.

It is found in the nucleus. In terms of biological role, may be involved in the control of the cell cycle at the G1/S (start) and G2/M (mitosis) transitions. In Xenopus laevis (African clawed frog), this protein is Cyclin-A1 (ccna1).